We begin with the raw amino-acid sequence, 110 residues long: UPF0367 protein Syncc9605_2376 (110 aa).

This sequence belongs to the UPF0367 family.

In Synechococcus sp. (strain CC9605), this protein is UPF0367 protein Syncc9605_2376.